The following is a 273-amino-acid chain: Bis(5'-nucleosyl)-tetraphosphatase, symmetrical (273 aa).

It belongs to the Ap4A hydrolase family.

The catalysed reaction is P(1),P(4)-bis(5'-adenosyl) tetraphosphate + H2O = 2 ADP + 2 H(+). Hydrolyzes diadenosine 5',5'''-P1,P4-tetraphosphate to yield ADP. The protein is Bis(5'-nucleosyl)-tetraphosphatase, symmetrical of Aeromonas hydrophila subsp. hydrophila (strain ATCC 7966 / DSM 30187 / BCRC 13018 / CCUG 14551 / JCM 1027 / KCTC 2358 / NCIMB 9240 / NCTC 8049).